The sequence spans 272 residues: Shikimate dehydrogenase (NADP(+)) (272 aa).

Residues 14 to 16 and T61 each bind shikimate; that span reads SRS. Residue K65 is the Proton acceptor of the active site. E77 contacts NADP(+). Shikimate contacts are provided by N86 and D102. Residues 126–130, 149–154, and M213 contribute to the NADP(+) site; these read GVGGA and NRTFPR. Residue Y215 participates in shikimate binding. Position 237 (G237) interacts with NADP(+).

This sequence belongs to the shikimate dehydrogenase family. As to quaternary structure, homodimer.

The enzyme catalyses shikimate + NADP(+) = 3-dehydroshikimate + NADPH + H(+). The protein operates within metabolic intermediate biosynthesis; chorismate biosynthesis; chorismate from D-erythrose 4-phosphate and phosphoenolpyruvate: step 4/7. Involved in the biosynthesis of the chorismate, which leads to the biosynthesis of aromatic amino acids. Catalyzes the reversible NADPH linked reduction of 3-dehydroshikimate (DHSA) to yield shikimate (SA). The sequence is that of Shikimate dehydrogenase (NADP(+)) from Sodalis glossinidius (strain morsitans).